Reading from the N-terminus, the 117-residue chain is Large ribosomal subunit protein bL20 (117 aa).

It belongs to the bacterial ribosomal protein bL20 family.

Functionally, binds directly to 23S ribosomal RNA and is necessary for the in vitro assembly process of the 50S ribosomal subunit. It is not involved in the protein synthesizing functions of that subunit. This chain is Large ribosomal subunit protein bL20, found in Vibrio metschnikovii.